Here is a 1649-residue protein sequence, read N- to C-terminus: Cortactin-binding protein 2 (1649 aa).

The disordered stretch occupies residues 1 to 27 (MATDSASCEPDLSRAPGDAEGATAEAA). Over residues 15–25 (APGDAEGATAE) the composition is skewed to low complexity. The stretch at 118–275 (RKMQERMSAQ…EQMKKGNDGK (158 aa)) forms a coiled coil. Disordered stretches follow at residues 322 to 439 (PLSV…PGLN), 451 to 476 (GNANDPDQNGNNTQSPPSRDVSPTSR), and 492 to 604 (ALSR…LPPK). Residues 330–342 (STGSPLVSTNTKG) show a composition bias toward polar residues. A compositionally biased stretch (low complexity) spans 395–416 (STPSTPSGTAPAAAQTLGAAPQ). A compositionally biased stretch (polar residues) spans 492-503 (ALSRFTSPQAGA). At arginine 495 the chain carries Asymmetric dimethylarginine. ANK repeat units follow at residues 699–729 (GRPTLLQQAAAQGNVTLLSMLLNEEGLDINY), 733–762 (DSHSALYSAAKNGHTDCVRLLLNAEARVDA), 766–795 (NGFTPLCVAAAQGHFECIELLTAYNANINH), 799–828 (GGQTPLYLACKTGNKECIKLLLEAGTDRSI), 832–861 (DGWTPIHAAVDTGNVDSLKLLMYHRVPAPG), and 901–931 (EGWTAAHIAASKGFKNCLEILCRHGGLEPER). A disordered region spans residues 1438–1471 (SAAWRKVNTSPRKKPGHFSSPMWNKPDLKHEGMR). At serine 1510 the chain carries Phosphoserine. The segment at 1527–1649 (KSESDISKIA…KHEHVEKRNK (123 aa)) is disordered. The segment covering 1528-1546 (SESDISKIADSREDLRTFD) has biased composition (basic and acidic residues). 3 stretches are compositionally biased toward polar residues: residues 1547–1557 (SSRTNPVTSAP), 1571–1584 (PLSSHQTTECSNSK), and 1621–1630 (NTRQLEINNN). Residues 1631–1649 (SKEENWNVDKHEHVEKRNK) are compositionally biased toward basic and acidic residues.

In terms of assembly, interacts with CTTN/cortactin SH3 domain. Interacts with STRN, STRN4/zinedin and MOB4/phocein; this interactions mediate the association with the STRIPAK core complex and may regulate dendritic spine distribution of the STRIPAK complex in hippocampal neurons. Activation of glutamate receptors weakens the interaction with STRN and STRN4.

The protein localises to the cytoplasm. It localises to the cell cortex. It is found in the cell projection. Its subcellular location is the dendritic spine. In terms of biological role, regulates the dendritic spine distribution of CTTN/cortactin in hippocampal neurons, and thus controls dendritic spinogenesis and dendritic spine maintenance. Associates with the striatin-interacting phosphatase and kinase (STRIPAK) core complex to regulate dendritic spine distribution of the STRIPAK complex in hippocampal neurons. In Rattus norvegicus (Rat), this protein is Cortactin-binding protein 2 (Cttnbp2).